The primary structure comprises 259 residues: Ribosomal RNA small subunit methyltransferase J (259 aa).

Residues 101–102, 117–118, 153–154, and aspartate 176 contribute to the S-adenosyl-L-methionine site; these read RD, ER, and SS.

The protein belongs to the methyltransferase superfamily. RsmJ family.

It localises to the cytoplasm. The catalysed reaction is guanosine(1516) in 16S rRNA + S-adenosyl-L-methionine = N(2)-methylguanosine(1516) in 16S rRNA + S-adenosyl-L-homocysteine + H(+). In terms of biological role, specifically methylates the guanosine in position 1516 of 16S rRNA. In Vibrio parahaemolyticus serotype O3:K6 (strain RIMD 2210633), this protein is Ribosomal RNA small subunit methyltransferase J.